Here is a 181-residue protein sequence, read N- to C-terminus: Protein FAM237A (181 aa).

A signal peptide spans 1-33 (MADPGNRGGIHRPLSFTCSLLIVGMCCVSPFFC). Position 113 is a leucine amide (leucine 113). Positions 114 to 181 (GRRQLVGEEE…GKVNLEIKRK (68 aa)) are cleaved as a propeptide — removed in the mature form.

The active form requires C-terminal amidation and disulfide bond formation. As to expression, expressed in the pituitary, testis, and heart and at lower levels in the brain.

It is found in the secreted. In terms of biological role, may be capable of activating GPR83 via the GNAQ signaling pathway. The protein is Protein FAM237A of Homo sapiens (Human).